The chain runs to 185 residues: Ribosome-recycling factor (185 aa).

This sequence belongs to the RRF family.

It is found in the cytoplasm. Responsible for the release of ribosomes from messenger RNA at the termination of protein biosynthesis. May increase the efficiency of translation by recycling ribosomes from one round of translation to another. This Shewanella frigidimarina (strain NCIMB 400) protein is Ribosome-recycling factor.